The primary structure comprises 524 residues: Peptide chain release factor 3 (524 aa).

A tr-type G domain is found at 10 to 278 (DSRRTFAIIS…TFLQFAPAPH (269 aa)). GTP is bound by residues 19–26 (SHPDAGKT), 87–91 (DTPGH), and 141–144 (NKLD).

This sequence belongs to the TRAFAC class translation factor GTPase superfamily. Classic translation factor GTPase family. PrfC subfamily.

It is found in the cytoplasm. Its function is as follows. Increases the formation of ribosomal termination complexes and stimulates activities of RF-1 and RF-2. It binds guanine nucleotides and has strong preference for UGA stop codons. It may interact directly with the ribosome. The stimulation of RF-1 and RF-2 is significantly reduced by GTP and GDP, but not by GMP. This Enterococcus faecalis (strain ATCC 700802 / V583) protein is Peptide chain release factor 3.